The sequence spans 337 residues: Probable cytosolic iron-sulfur protein assembly protein CIAO1 homolog (337 aa).

WD repeat units follow at residues 15 to 54 (DDTSRVWMTCWHHGGRILASCGDDKAVRVWSLVGEPDSKM), 65 to 104 (SHTRAVRSVAFSNDGKCLVSASFDASVVVYQQEDGEFAEV), 109 to 148 (GHESEVKCAVFSKSDEFLATCSRDKSVWFWQQDEDEDFSV), 154 to 193 (PHTQDVKQVAWHPTEDLLVSCSYDSSIRFYRFDGEDWVTQ), 199 to 238 (CHVGTVWSIAFDTEGHRLVTVGEDHCIQLFVRENIGSKSA), 253 to 292 (NTRWPLYSVAWNSTNDVIATGGGDCKIRLFKISSTPESPV), and 301 to 337 (RHELDVNHVAWNPNPKFSNLLTSASDDGTIRLWELEI).

This sequence belongs to the WD repeat CIA1 family.

Essential component of the cytosolic iron-sulfur (Fe/S) protein assembly machinery. Required for the maturation of extramitochondrial Fe/S proteins. This chain is Probable cytosolic iron-sulfur protein assembly protein CIAO1 homolog, found in Caenorhabditis elegans.